We begin with the raw amino-acid sequence, 258 residues long: Homeobox-leucine zipper protein ATHB-7 (258 aa).

The homeobox DNA-binding region spans 29 to 88 (NKNNQRRFSDEQIKSLEMMFESETRLEPRKKVQLARELGLQPRQVAIWFQNKRARWKSKQ). Positions 89-124 (LETEYNILRQNYDNLASQFESLKKEKQALVSELQRL) are leucine-zipper. The tract at residues 149 to 183 (SSTHHESENEENRRRKPEEVRPEMEMKDDKGHHGV) is disordered. The segment covering 151–183 (THHESENEENRRRKPEEVRPEMEMKDDKGHHGV) has biased composition (basic and acidic residues).

The protein belongs to the HD-ZIP homeobox family. Class I subfamily. In terms of assembly, interacts with TBP2 and TFIIB1. Widely expressed.

The protein localises to the nucleus. Functionally, probable transcription activator that may act as growth regulators in response to water deficit. This Arabidopsis thaliana (Mouse-ear cress) protein is Homeobox-leucine zipper protein ATHB-7 (ATHB-7).